We begin with the raw amino-acid sequence, 266 residues long: Protein crossbronx-like (266 aa).

The 164-residue stretch at 15 to 178 (KQGYHILAEY…VQEQAILSRN (164 aa)) folds into the UBC core domain. The interval 234–266 (SSRQLDEEEANQVEKLHRGRIPEHQREESEVSL) is disordered. Over residues 245 to 266 (QVEKLHRGRIPEHQREESEVSL) the composition is skewed to basic and acidic residues.

It belongs to the ubiquitin-conjugating enzyme family. FTS subfamily.

The polypeptide is Protein crossbronx-like (Drosophila melanogaster (Fruit fly)).